Reading from the N-terminus, the 320-residue chain is Cytochrome f (320 aa).

The first 35 residues, 1 to 35, serve as a signal peptide directing secretion; it reads MQTRNTFSWIREEITRSISVSLMIYIITWASISSA. Residues Tyr-36, Cys-56, Cys-59, and His-60 each coordinate heme. A helical transmembrane segment spans residues 286–306; sequence VQGLLFFLGSVVLAQIFLVLK.

The protein belongs to the cytochrome f family. The 4 large subunits of the cytochrome b6-f complex are cytochrome b6, subunit IV (17 kDa polypeptide, petD), cytochrome f and the Rieske protein, while the 4 small subunits are PetG, PetL, PetM and PetN. The complex functions as a dimer. Heme serves as cofactor.

The protein localises to the plastid. It is found in the chloroplast thylakoid membrane. Functionally, component of the cytochrome b6-f complex, which mediates electron transfer between photosystem II (PSII) and photosystem I (PSI), cyclic electron flow around PSI, and state transitions. The chain is Cytochrome f from Nasturtium officinale (Watercress).